The chain runs to 363 residues: 3-isopropylmalate dehydrogenase (363 aa).

78–91 (GPKWENLPPESQPE) contributes to the NAD(+) binding site. The substrate site is built by Arg99, Arg109, Arg138, and Asp227. Mg(2+) contacts are provided by Asp227, Asp251, and Asp255. NAD(+) is bound at residue 285–297 (GSAPDIAGKNIAN).

Belongs to the isocitrate and isopropylmalate dehydrogenases family. LeuB type 1 subfamily. In terms of assembly, homodimer. Mg(2+) serves as cofactor. The cofactor is Mn(2+).

The protein resides in the cytoplasm. It carries out the reaction (2R,3S)-3-isopropylmalate + NAD(+) = 4-methyl-2-oxopentanoate + CO2 + NADH. It participates in amino-acid biosynthesis; L-leucine biosynthesis; L-leucine from 3-methyl-2-oxobutanoate: step 3/4. Catalyzes the oxidation of 3-carboxy-2-hydroxy-4-methylpentanoate (3-isopropylmalate) to 3-carboxy-4-methyl-2-oxopentanoate. The product decarboxylates to 4-methyl-2 oxopentanoate. This is 3-isopropylmalate dehydrogenase from Salmonella paratyphi A (strain ATCC 9150 / SARB42).